Reading from the N-terminus, the 744-residue chain is MTSQPSSGKGRGRNLSIDEYNVYDDAKTYYTTEDRHHNHRAGARTRTYSQNSLFKQFERLGLQKEPYRRGSHDESTIPQSRRFLIQVEPTLQSLQSQEDTDGNMQITIEDNGPKVLSLRTAASNGYNRFDIRGTYMLSNLLQELYLAKEYGRKQIILDEARLNENPVNRLSRLIKDHFWEGLTRRIDASSIEIAARDPKDWTDDPRPRIYIPRGAPEQHEYYTKVALDRPELRLDVQYLPEKITPEIVRDMNAKPGLLAVDMEEVVDPKTGEKTLRGRPFVVPGGRFNELYGWDSYMESLGLLVNDRVDLAKSMVQNFCFCIKHYGKILNATRSYYLCRSQPPFLTDMTLRVYDKIKHEPGALEFLRQSLLAAIKEYYSVWTAEPRLDPVTGLSRYRPEGLGVPPETEAGHFIHILEPYAKKHNMSFDEFVYAYNHGEIKEPTLDDYFMHDRAVRESGHDTTYRFEGICADLATIDLNSLLFKYETDIARTIRNVFHDKFEVPDDWLATNNPAASKLETSAMWDRRAKRRKLAIDKYLWNEEAGMYFDYNTATRKQCNYESATTFWALWAGVSNPKQAAAMVTKALPKLEAFGGLLSGTKESRGEIGLERPNRQWDYPYGWAPQQILAWTGLYRYGFNEEAERLAYKWLFMITKAFVDFNGVVVEKYDVTRPIDPHRVDAEYGNQGLDFKGVAKEGFGWVNASYVYGLQIVNAHMRRALGTLTPYETFMKAVEENRNKALSELV.

The Ca(2+) site is built by Asp99, Asp101, Asn103, Gln105, and Asp110. Residues Arg286, 293-294 (WD), Asn330, 339-341 (RSQ), Glu406, Arg455, and Gly458 each bind substrate. Residues Asp460 and Glu665 each act as proton donor/acceptor in the active site.

It belongs to the glycosyl hydrolase 37 family. The cofactor is Ca(2+).

It localises to the cytoplasm. The catalysed reaction is alpha,alpha-trehalose + H2O = alpha-D-glucose + beta-D-glucose. Its pathway is carbohydrate degradation. In terms of biological role, hydrolyzes intracellular trehalose to glucose. This chain is Cytosolic neutral trehalase, found in Neurospora crassa (strain ATCC 24698 / 74-OR23-1A / CBS 708.71 / DSM 1257 / FGSC 987).